Reading from the N-terminus, the 413-residue chain is Cardiolipin synthase B (413 aa).

2 PLD phosphodiesterase domains span residues 108 to 135 (IFRR…SAEH) and 285 to 312 (RRRP…DPLS). Catalysis depends on residues His-113, Lys-115, Asp-120, His-290, Lys-292, and Asp-297. The tract at residues 388–413 (AQVPPPAQPEMETQDRVDPENTGVKP) is disordered.

The protein belongs to the phospholipase D family. Cardiolipin synthase subfamily. ClsB sub-subfamily.

The protein localises to the cell membrane. The catalysed reaction is 2 a 1,2-diacyl-sn-glycero-3-phospho-(1'-sn-glycerol) = a cardiolipin + glycerol. Its function is as follows. Catalyzes the phosphatidyl group transfer from one phosphatidylglycerol molecule to another to form cardiolipin (CL) (diphosphatidylglycerol) and glycerol. This chain is Cardiolipin synthase B, found in Salmonella typhimurium (strain LT2 / SGSC1412 / ATCC 700720).